The sequence spans 136 residues: UPF0275 protein PM0493 (136 aa).

It belongs to the UPF0275 family.

This Pasteurella multocida (strain Pm70) protein is UPF0275 protein PM0493.